The sequence spans 337 residues: DNA-directed RNA polymerase subunit alpha (337 aa).

The alpha N-terminal domain (alpha-NTD) stretch occupies residues Met1–Glu233. An alpha C-terminal domain (alpha-CTD) region spans residues Phe249–Tyr337.

The protein belongs to the RNA polymerase alpha chain family. As to quaternary structure, homodimer. The RNAP catalytic core consists of 2 alpha, 1 beta, 1 beta' and 1 omega subunit. When a sigma factor is associated with the core the holoenzyme is formed, which can initiate transcription.

It carries out the reaction RNA(n) + a ribonucleoside 5'-triphosphate = RNA(n+1) + diphosphate. Functionally, DNA-dependent RNA polymerase catalyzes the transcription of DNA into RNA using the four ribonucleoside triphosphates as substrates. The polypeptide is DNA-directed RNA polymerase subunit alpha (Brucella suis (strain ATCC 23445 / NCTC 10510)).